A 676-amino-acid chain; its full sequence is UvrABC system protein B (676 aa).

Positions 35–192 (QGVADGLMYQ…ARLVAMQYTR (158 aa)) constitute a Helicase ATP-binding domain. Position 48-55 (48-55 (GVTGSGKT)) interacts with ATP. The Beta-hairpin motif lies at 101-124 (YYDYYQPEAYVPTRDLFIEKDSSV). One can recognise a Helicase C-terminal domain in the interval 439–605 (QVDDLLGEIR…GVNKAVRELI (167 aa)). Positions 634–669 (AREIKRLEKLMMDHARNLEFEQAAAARDALTALKNR) constitute a UVR domain.

This sequence belongs to the UvrB family. Forms a heterotetramer with UvrA during the search for lesions. Interacts with UvrC in an incision complex.

The protein resides in the cytoplasm. In terms of biological role, the UvrABC repair system catalyzes the recognition and processing of DNA lesions. A damage recognition complex composed of 2 UvrA and 2 UvrB subunits scans DNA for abnormalities. Upon binding of the UvrA(2)B(2) complex to a putative damaged site, the DNA wraps around one UvrB monomer. DNA wrap is dependent on ATP binding by UvrB and probably causes local melting of the DNA helix, facilitating insertion of UvrB beta-hairpin between the DNA strands. Then UvrB probes one DNA strand for the presence of a lesion. If a lesion is found the UvrA subunits dissociate and the UvrB-DNA preincision complex is formed. This complex is subsequently bound by UvrC and the second UvrB is released. If no lesion is found, the DNA wraps around the other UvrB subunit that will check the other stand for damage. This is UvrABC system protein B from Bordetella avium (strain 197N).